We begin with the raw amino-acid sequence, 109 residues long: Iron-sulfur cluster assembly protein CyaY (109 aa).

This sequence belongs to the frataxin family.

Its function is as follows. Involved in iron-sulfur (Fe-S) cluster assembly. May act as a regulator of Fe-S biogenesis. The polypeptide is Iron-sulfur cluster assembly protein CyaY (Bordetella bronchiseptica (strain ATCC BAA-588 / NCTC 13252 / RB50) (Alcaligenes bronchisepticus)).